The following is a 323-amino-acid chain: Annexin A3 (323 aa).

Position 2 is an N-acetylalanine (Ala2). 4 Annexin repeats span residues Phe18–Thr89, Pro90–Asn161, Gln173–Arg245, and Asn249–Gly320. The residue at position 177 (Lys177) is an N6-acetyllysine. Thr267 is modified (phosphothreonine).

This sequence belongs to the annexin family.

Inhibitor of phospholipase A2, also possesses anti-coagulant properties. Also cleaves the cyclic bond of inositol 1,2-cyclic phosphate to form inositol 1-phosphate. In Bos taurus (Bovine), this protein is Annexin A3 (ANXA3).